The primary structure comprises 227 residues: Class I hydrophobin A (227 aa).

Residues methionine 1–alanine 18 form the signal peptide. Asparagine 50 carries N-linked (GlcNAc...) asparagine glycosylation. Disulfide bonds link cysteine 60-cysteine 138, cysteine 68-cysteine 132, and cysteine 69-cysteine 109.

It belongs to the fungal hydrophobin family.

It is found in the secreted. Its subcellular location is the cell wall. Functionally, aerial growth, conidiation, and dispersal of filamentous fungi in the environment rely upon a capability of their secreting small amphipathic proteins called hydrophobins (HPBs) with low sequence identity. Class I can self-assemble into an outermost layer of rodlet bundles on aerial cell surfaces, conferring cellular hydrophobicity that supports fungal growth, development and dispersal; whereas Class II form highly ordered films at water-air interfaces through intermolecular interactions but contribute nothing to the rodlet structure. In P.expansum, hydrophobins contribute to germination, tolerance to cold stress and mycotoxins patulin and citrinin production. HfbA and HfbB are essential for fungal surface hydrophobicity and HfbA mediates air and water dispersal. This is Class I hydrophobin A from Penicillium expansum (Blue mold rot fungus).